The sequence spans 297 residues: MNLGTLVSETRNPQTMDLDALPTPELVKRFNEQDTRVAEAVKATLPDVARAVDAAAAALKSGGRIIYMGAGTSGRLGVLDASECPPTFGVPHGLVVGLIAGGPGALLKAVEGAEDSQQAGEDDLVALNLQEQDLVVGLAASGRTPYVIGGLRYARQSGCTTVAVSCNPDSPIAREANIAISPVVGPEALTGSTRLKSGTAQKMVLNMISTGAMVKFGKVYQNLMVDMKATNVKLVDRACRMVVEATGIGREEAEALLKQTDFEVKPAILMALTGLDAAAAREKLAAHQGFLRAALEH.

Residues 55-218 (AAAALKSGGR…STGAMVKFGK (164 aa)) enclose the SIS domain. Glu-83 functions as the Proton donor in the catalytic mechanism. Glu-114 is a catalytic residue.

Belongs to the GCKR-like family. MurNAc-6-P etherase subfamily. In terms of assembly, homodimer.

It catalyses the reaction N-acetyl-D-muramate 6-phosphate + H2O = N-acetyl-D-glucosamine 6-phosphate + (R)-lactate. Its pathway is amino-sugar metabolism; 1,6-anhydro-N-acetylmuramate degradation. The protein operates within amino-sugar metabolism; N-acetylmuramate degradation. It participates in cell wall biogenesis; peptidoglycan recycling. In terms of biological role, specifically catalyzes the cleavage of the D-lactyl ether substituent of MurNAc 6-phosphate, producing GlcNAc 6-phosphate and D-lactate. Together with AnmK, is also required for the utilization of anhydro-N-acetylmuramic acid (anhMurNAc) either imported from the medium or derived from its own cell wall murein, and thus plays a role in cell wall recycling. The polypeptide is N-acetylmuramic acid 6-phosphate etherase (Salmonella choleraesuis (strain SC-B67)).